The chain runs to 252 residues: Imidazole glycerol phosphate synthase subunit HisF (252 aa).

Active-site residues include Asp11 and Asp130.

This sequence belongs to the HisA/HisF family. In terms of assembly, heterodimer of HisH and HisF.

It localises to the cytoplasm. The catalysed reaction is 5-[(5-phospho-1-deoxy-D-ribulos-1-ylimino)methylamino]-1-(5-phospho-beta-D-ribosyl)imidazole-4-carboxamide + L-glutamine = D-erythro-1-(imidazol-4-yl)glycerol 3-phosphate + 5-amino-1-(5-phospho-beta-D-ribosyl)imidazole-4-carboxamide + L-glutamate + H(+). It functions in the pathway amino-acid biosynthesis; L-histidine biosynthesis; L-histidine from 5-phospho-alpha-D-ribose 1-diphosphate: step 5/9. Its function is as follows. IGPS catalyzes the conversion of PRFAR and glutamine to IGP, AICAR and glutamate. The HisF subunit catalyzes the cyclization activity that produces IGP and AICAR from PRFAR using the ammonia provided by the HisH subunit. The sequence is that of Imidazole glycerol phosphate synthase subunit HisF from Azobacteroides pseudotrichonymphae genomovar. CFP2.